The following is a 189-amino-acid chain: Peptidyl-tRNA hydrolase (189 aa).

Tyr15 is a binding site for tRNA. His20 acts as the Proton acceptor in catalysis. TRNA contacts are provided by Tyr67, Asn69, and Asn115.

The protein belongs to the PTH family. In terms of assembly, monomer.

Its subcellular location is the cytoplasm. It catalyses the reaction an N-acyl-L-alpha-aminoacyl-tRNA + H2O = an N-acyl-L-amino acid + a tRNA + H(+). In terms of biological role, hydrolyzes ribosome-free peptidyl-tRNAs (with 1 or more amino acids incorporated), which drop off the ribosome during protein synthesis, or as a result of ribosome stalling. Catalyzes the release of premature peptidyl moieties from peptidyl-tRNA molecules trapped in stalled 50S ribosomal subunits, and thus maintains levels of free tRNAs and 50S ribosomes. This chain is Peptidyl-tRNA hydrolase, found in Symbiobacterium thermophilum (strain DSM 24528 / JCM 14929 / IAM 14863 / T).